Reading from the N-terminus, the 382-residue chain is MTEQRPLTIALVAGETSGDILGAGLIRALKERVPNARFVGVAGPRMQAEGCEAWYEMEELAVMGIVEVLGRLRRLLHIRADLTKRFGELKPDVFVGIDAPDFNITLEGNLKKQGIKTIHYVSPSVWAWRQKRVFKIGRATDLVLAFLPFEKAFYDKYNVPCRFIGHTMADAMPLDPDKNGARDVLGIPYDAHCLALLPGSRGAEVEMLSADFLKTAQLLRQTYPDLEIVVPLVNAKRREQFERIKAAVAPDLSVHLLDGMGREAMVASDAALLASGTAALECMLAKCPMVVGYRMKPFTFWLAKRLVKTDYVSLPNLLAGRELVKELLQEECEPQKLAAALLPLLANGKTSHAMHDTFRELHQQIRCNADEQAAQAVLELAQ.

The protein belongs to the LpxB family.

It catalyses the reaction 2-N,3-O-bis[(3R)-3-hydroxytetradecanoyl]-alpha-D-glucosaminyl 1-phosphate + UDP-2-N,3-O-bis[(3R)-3-hydroxytetradecanoyl]-alpha-D-glucosamine = lipid A disaccharide (E. coli) + UDP + H(+). The enzyme catalyses a lipid X + a UDP-2-N,3-O-bis[(3R)-3-hydroxyacyl]-alpha-D-glucosamine = a lipid A disaccharide + UDP + H(+). The protein operates within glycolipid biosynthesis; lipid IV(A) biosynthesis; lipid IV(A) from (3R)-3-hydroxytetradecanoyl-[acyl-carrier-protein] and UDP-N-acetyl-alpha-D-glucosamine: step 5/6. Functionally, condensation of UDP-2,3-diacylglucosamine and 2,3-diacylglucosamine-1-phosphate to form lipid A disaccharide, a precursor of lipid A, a phosphorylated glycolipid that anchors the lipopolysaccharide to the outer membrane of the cell. The chain is Lipid-A-disaccharide synthase from Escherichia coli O45:K1 (strain S88 / ExPEC).